The following is a 458-amino-acid chain: Cysteine--tRNA ligase (458 aa).

C29 is a Zn(2+) binding site. The 'HIGH' region motif lies at 31-41 (MTVYDLCHLGH). Zn(2+)-binding residues include C213, H238, and E242. A 'KMSKS' region motif is present at residues 270–274 (KMSKS). K273 provides a ligand contact to ATP.

Belongs to the class-I aminoacyl-tRNA synthetase family. In terms of assembly, monomer. Requires Zn(2+) as cofactor.

It is found in the cytoplasm. It catalyses the reaction tRNA(Cys) + L-cysteine + ATP = L-cysteinyl-tRNA(Cys) + AMP + diphosphate. The sequence is that of Cysteine--tRNA ligase from Acidovorax ebreus (strain TPSY) (Diaphorobacter sp. (strain TPSY)).